A 118-amino-acid chain; its full sequence is UPF0251 protein TTE1845 (118 aa).

This sequence belongs to the UPF0251 family.

The protein is UPF0251 protein TTE1845 of Caldanaerobacter subterraneus subsp. tengcongensis (strain DSM 15242 / JCM 11007 / NBRC 100824 / MB4) (Thermoanaerobacter tengcongensis).